Here is a 97-residue protein sequence, read N- to C-terminus: UPF0235 protein Daro_3887 (97 aa).

The protein belongs to the UPF0235 family.

This Dechloromonas aromatica (strain RCB) protein is UPF0235 protein Daro_3887.